We begin with the raw amino-acid sequence, 614 residues long: 1-deoxy-D-xylulose-5-phosphate synthase (614 aa).

Thiamine diphosphate contacts are provided by residues His76 and 117–119 (GHS). Asp148 is a Mg(2+) binding site. Thiamine diphosphate contacts are provided by residues 149-150 (GA), Asn177, Tyr285, and Glu366. Residue Asn177 participates in Mg(2+) binding.

Belongs to the transketolase family. DXPS subfamily. Homodimer. It depends on Mg(2+) as a cofactor. Requires thiamine diphosphate as cofactor.

The enzyme catalyses D-glyceraldehyde 3-phosphate + pyruvate + H(+) = 1-deoxy-D-xylulose 5-phosphate + CO2. The protein operates within metabolic intermediate biosynthesis; 1-deoxy-D-xylulose 5-phosphate biosynthesis; 1-deoxy-D-xylulose 5-phosphate from D-glyceraldehyde 3-phosphate and pyruvate: step 1/1. Catalyzes the acyloin condensation reaction between C atoms 2 and 3 of pyruvate and glyceraldehyde 3-phosphate to yield 1-deoxy-D-xylulose-5-phosphate (DXP). In Pasteurella multocida (strain Pm70), this protein is 1-deoxy-D-xylulose-5-phosphate synthase.